Here is a 381-residue protein sequence, read N- to C-terminus: Putative 8-amino-7-oxononanoate synthase (381 aa).

R20 contacts substrate. 107 to 108 (GY) is a binding site for pyridoxal 5'-phosphate. Residue H132 participates in substrate binding. Residues S180, 205–208 (DEAH), and 236–239 (TLSK) each bind pyridoxal 5'-phosphate. At K239 the chain carries N6-(pyridoxal phosphate)lysine. T351 contacts substrate.

This sequence belongs to the class-II pyridoxal-phosphate-dependent aminotransferase family. BioF subfamily. Homodimer. Requires pyridoxal 5'-phosphate as cofactor.

It carries out the reaction 6-carboxyhexanoyl-[ACP] + L-alanine + H(+) = (8S)-8-amino-7-oxononanoate + holo-[ACP] + CO2. Its pathway is cofactor biosynthesis; biotin biosynthesis. Its function is as follows. Catalyzes the decarboxylative condensation of pimeloyl-[acyl-carrier protein] and L-alanine to produce 8-amino-7-oxononanoate (AON), [acyl-carrier protein], and carbon dioxide. This Rippkaea orientalis (strain PCC 8801 / RF-1) (Cyanothece sp. (strain PCC 8801)) protein is Putative 8-amino-7-oxononanoate synthase (bioF).